A 457-amino-acid chain; its full sequence is Biphenyl dioxygenase subunit alpha (457 aa).

Positions 58-174 (WLMLGHETHI…VETYKGLVFA (117 aa)) constitute a Rieske domain. [2Fe-2S] cluster-binding residues include Cys-100, His-102, Cys-120, and His-123. His-233 and His-239 together coordinate Fe cation.

The protein belongs to the bacterial ring-hydroxylating dioxygenase alpha subunit family. In terms of assembly, heterohexamer consisting of three BphA subunits and three BphE subunits. A ferredoxin (BphF) and a ferredoxin reductase (BphG) must be present to obtain activity. [2Fe-2S] cluster serves as cofactor. Fe cation is required as a cofactor.

It catalyses the reaction biphenyl + NADH + O2 + H(+) = (2R,3S)-3-phenylcyclohexa-3,5-diene-1,2-diol + NAD(+). It participates in xenobiotic degradation; biphenyl degradation; 2-hydroxy-2,4-pentadienoate and benzoate from biphenyl: step 1/4. The chain is Biphenyl dioxygenase subunit alpha (bphA) from Comamonas testosteroni (Pseudomonas testosteroni).